The sequence spans 292 residues: Homoserine kinase (292 aa).

81–91 (RPRSGLGSSGA) is a binding site for ATP.

It belongs to the GHMP kinase family. Homoserine kinase subfamily.

Its subcellular location is the cytoplasm. The catalysed reaction is L-homoserine + ATP = O-phospho-L-homoserine + ADP + H(+). The protein operates within amino-acid biosynthesis; L-threonine biosynthesis; L-threonine from L-aspartate: step 4/5. In terms of biological role, catalyzes the ATP-dependent phosphorylation of L-homoserine to L-homoserine phosphate. The protein is Homoserine kinase of Thermococcus kodakarensis (strain ATCC BAA-918 / JCM 12380 / KOD1) (Pyrococcus kodakaraensis (strain KOD1)).